The following is a 299-amino-acid chain: 4-hydroxybenzoate octaprenyltransferase (299 aa).

8 helical membrane passes run 33–53 (VGFL…AGGV), 56–76 (WWTL…GCVI), 107–127 (LLMF…MNQL), 151–171 (LPQV…FAAI), 180–200 (WLLY…CAMV), 214–234 (AILF…LMLF), 247–267 (HTYW…FIIA), and 278–298 (AFMH…LATT).

This sequence belongs to the UbiA prenyltransferase family. Mg(2+) serves as cofactor.

It is found in the cell inner membrane. It catalyses the reaction all-trans-octaprenyl diphosphate + 4-hydroxybenzoate = 4-hydroxy-3-(all-trans-octaprenyl)benzoate + diphosphate. The protein operates within cofactor biosynthesis; ubiquinone biosynthesis. Its function is as follows. Catalyzes the prenylation of para-hydroxybenzoate (PHB) with an all-trans polyprenyl group. Mediates the second step in the final reaction sequence of ubiquinone-8 (UQ-8) biosynthesis, which is the condensation of the polyisoprenoid side chain with PHB, generating the first membrane-bound Q intermediate 3-octaprenyl-4-hydroxybenzoate. The polypeptide is 4-hydroxybenzoate octaprenyltransferase (Xylella fastidiosa (strain 9a5c)).